A 392-amino-acid polypeptide reads, in one-letter code: MDLFGDLPEPERAPRPSAGKEAQGRPVLFEDLPPASSTDSGSGGPLLFDDLPPAASGNSGSLATSGSQVVKTEGKGAKRKAPEEEKNGGEELVEKKVCKASSVIFGLKGYVAERKGEREEMQDAHVILNDITQECNPPSSLITRVSYFAVFDGHGGIRASKFAAQNLHQNLIRKFPKGDIISVEKTVKRCLLDTFKHTDEEFLKQASSQKPAWKDGSTATCVLAVDNILYIANLGDSRAILCRYNEESQKHAALSLSKEHNPTQYEERMRIQKAGGNVRDGRVLGVLEVSRSIGDGQYKRCGVTSVPDIRRCQLTPNDRFILLACDGLFKVFTPEEAVNFILSCLEDDKIQTREGKPAVDARYEAACNRLANKAVQRGSADNVTVMVVRIGH.

N-acetylmethionine is present on Met1. Residues 1 to 91 (MDLFGDLPEP…PEEEKNGGEE (91 aa)) are disordered. A compositionally biased stretch (polar residues) spans 56–70 (SGNSGSLATSGSQVV). Basic and acidic residues predominate over residues 72-91 (TEGKGAKRKAPEEEKNGGEE). The PPM-type phosphatase domain occupies 108–390 (KGYVAERKGE…DNVTVMVVRI (283 aa)). Mn(2+) contacts are provided by Asp152 and Gly153. Lys210 carries the N6-acetyllysine modification. Mn(2+) is bound by residues Asp326 and Asp381.

It belongs to the PP2C family. As to quaternary structure, interacts with ILK. Mg(2+) is required as a cofactor. The cofactor is Mn(2+).

It is found in the cytoplasm. It catalyses the reaction O-phospho-L-seryl-[protein] + H2O = L-seryl-[protein] + phosphate. The enzyme catalyses O-phospho-L-threonyl-[protein] + H2O = L-threonyl-[protein] + phosphate. In terms of biological role, protein phosphatase that may play a role in regulation of cell cycle progression via dephosphorylation of its substrates whose appropriate phosphorylation states might be crucial for cell proliferation. Selectively associates with integrin linked kinase (ILK), to modulate cell adhesion and growth factor signaling. Inhibits the ILK-GSK3B signaling axis and may play an important role in inhibiting oncogenic transformation. This is Integrin-linked kinase-associated serine/threonine phosphatase 2C (Ilkap) from Mus musculus (Mouse).